Reading from the N-terminus, the 477-residue chain is UDP-N-acetylglucosamine pyrophosphorylase (477 aa).

A Substrate binding motif is present at residues Met109–Gly112. UTP contacts are provided by residues Met109 to Gly112, Lys123, and Gln194. Ser218 is subject to Phosphoserine. Gly221 is a binding site for UTP. Asn222 contributes to the substrate binding site. UTP is bound at residue Asp252. Positions Glu302–Tyr303 match the Substrate binding motif. UTP is bound at residue Lys377. Lys409 is a substrate binding site. Ser461 is modified (phosphoserine).

The protein belongs to the UDPGP type 1 family.

It localises to the cytoplasm. The enzyme catalyses N-acetyl-alpha-D-glucosamine 1-phosphate + UTP + H(+) = UDP-N-acetyl-alpha-D-glucosamine + diphosphate. It participates in nucleotide-sugar biosynthesis; UDP-N-acetyl-alpha-D-glucosamine biosynthesis; UDP-N-acetyl-alpha-D-glucosamine from N-acetyl-alpha-D-glucosamine 1-phosphate: step 1/1. UDP-N-acetylglucosamine pyrophosphorylase that utilizes N-acetylglucosamine-1-phosphate as substrate. Together with AGM1, is involved in the production of UDP-N-acetylglucosamine from N-acetylglucosamine-6-phosphate. The protein is UDP-N-acetylglucosamine pyrophosphorylase (QRI1) of Saccharomyces cerevisiae (strain ATCC 204508 / S288c) (Baker's yeast).